The following is a 577-amino-acid chain: Zinc finger-containing ubiquitin peptidase 1 (577 aa).

The segment at 2–24 (LSCDICGETVTSEPDRKAHLIVH) adopts a C2H2-type 1 zinc-finger fold. The C2H2-type 2; atypical zinc finger occupies 29–52 (IICPFCKLSGINYNEMCFHIETAH). 2 C2H2-type zinc fingers span residues 153–176 (PECP…KTKH) and 192–214 (YDCP…VDLH). An MIU region spans residues 225–247 (DRVQCSSDRELAHQLQQEEERKR). Residues 231–261 (SDRELAHQLQQEEERKRKSEESRQEREEFQK) are compositionally biased toward basic and acidic residues. The segment at 231-262 (SDRELAHQLQQEEERKRKSEESRQEREEFQKL) is disordered. The segment at 248-273 (KSEESRQEREEFQKLQRQYGLDNSGG) is zUBD/ZHA. Residue lysine 261 is modified to N6-acetyllysine. Cysteine 359 functions as the Nucleophile in the catalytic mechanism. The active-site Proton acceptor is the histidine 490. Residue aspartate 511 is part of the active site.

The protein belongs to the peptidase C78 family. ZUFSP subfamily. As to quaternary structure, interacts with RPA1 and RPA2.

Its subcellular location is the cytoplasm. The protein localises to the nucleus. It catalyses the reaction Thiol-dependent hydrolysis of ester, thioester, amide, peptide and isopeptide bonds formed by the C-terminal Gly of ubiquitin (a 76-residue protein attached to proteins as an intracellular targeting signal).. In terms of biological role, deubiquitinase with endodeubiquitinase activity that specifically interacts with and cleaves 'Lys-63'-linked long polyubiquitin chains. Shows only weak activity against 'Lys-11' and 'Lys-48'-linked chains. Plays an important role in genome stability pathways, functioning to prevent spontaneous DNA damage and also promote cellular survival in response to exogenous DNA damage. Modulates the ubiquitination status of replication protein A (RPA) complex proteins in response to replication stress. The protein is Zinc finger-containing ubiquitin peptidase 1 of Rattus norvegicus (Rat).